The primary structure comprises 368 residues: Germination protease (368 aa).

The propeptide occupies 1 to 15 (MKEPLDLSKYSVRTD).

Belongs to the peptidase A25 family. Homotetramer. Autoproteolytically processed. The inactive tetrameric zymogen termed p46 autoprocesses to a smaller form termed p41, which is active only during spore germination.

It carries out the reaction Endopeptidase action with P4 Glu or Asp, P1 preferably Glu &gt; Asp, P1' hydrophobic and P2' Ala.. Initiates the rapid degradation of small, acid-soluble proteins during spore germination. In Bacillus anthracis (strain A0248), this protein is Germination protease.